The primary structure comprises 230 residues: GTP cyclohydrolase III (230 aa).

Belongs to the archaeal-type GTP cyclohydrolase family.

It catalyses the reaction GTP + 3 H2O = 2-amino-5-formylamino-6-(5-phospho-D-ribosylamino)pyrimidin-4(3H)-one + 2 phosphate + 2 H(+). Catalyzes the formation of 2-amino-5-formylamino-6-ribofuranosylamino-4(3H)-pyrimidinone ribonucleotide monophosphate and inorganic phosphate from GTP. Also has an independent pyrophosphate phosphohydrolase activity. This is GTP cyclohydrolase III from Saccharolobus islandicus (strain M.14.25 / Kamchatka #1) (Sulfolobus islandicus).